The primary structure comprises 207 residues: Ribosome maturation factor RimP (207 aa).

This sequence belongs to the RimP family.

The protein resides in the cytoplasm. Functionally, required for maturation of 30S ribosomal subunits. The chain is Ribosome maturation factor RimP from Parvibaculum lavamentivorans (strain DS-1 / DSM 13023 / NCIMB 13966).